Here is a 157-residue protein sequence, read N- to C-terminus: 3-dehydroquinate dehydratase (157 aa).

Y29 serves as the catalytic Proton acceptor. Residues N80, H86, and D93 each coordinate substrate. H107 serves as the catalytic Proton donor. Residues 108–109 (IS) and R118 contribute to the substrate site.

This sequence belongs to the type-II 3-dehydroquinase family. Homododecamer.

It catalyses the reaction 3-dehydroquinate = 3-dehydroshikimate + H2O. Its pathway is metabolic intermediate biosynthesis; chorismate biosynthesis; chorismate from D-erythrose 4-phosphate and phosphoenolpyruvate: step 3/7. Functionally, catalyzes a trans-dehydration via an enolate intermediate. The sequence is that of 3-dehydroquinate dehydratase (aroQ) from Streptomyces coelicolor (strain ATCC BAA-471 / A3(2) / M145).